The following is a 298-amino-acid chain: 3'-5' exonuclease crn-4 (298 aa).

The Exonuclease domain occupies 12-192; the sequence is LILDFETTSD…DDCLNIATIL (181 aa). D15, E17, and D184 together coordinate Mg(2+). Zn(2+)-binding residues include C210, C260, C263, and C270.

Homodimer (via C-terminus). Interacts with crn-5; interaction promotes the DNase activity of crn-4. Interacts with cps-6, crn-1 and cyn-13. The cofactor is Mg(2+).

Its activity is regulated as follows. Exonuclease activity is inhibited in vitro by pontacyl violet 6R (PV6R), p-chloromercuriphenyl sulfonate (PCMPS), 5,5'-dithiobis(2-nitrobenzoic acid) (DTNB), aurintricarboxylic acid (ATA), 2-morpholin-4-ylethanesulfonate (MES), 4-[(4,6-dichloro-1,3,5-triazin-2-yl)amino]-2-(3-hydroxy-6-oxoxanthen-9-yl)benzoic acid (DR396) and fmoc-d-Cha-OH (FDCO). Interaction with ssRNA is reduced in vitro by PV6R. Its function is as follows. Possesses 3'-&gt;5' exoribonuclease activity in digestion of DNA and RNA. Cleaves nucleic acid substrates with efficiencies in the following order: single-stranded RNA (ssRNA) &gt; double-stranded DNA (dsDNA) &gt; single-stranded DNA (ssDNA). Involved in apoptotic DNA degradation. The polypeptide is 3'-5' exonuclease crn-4 (crn-4) (Caenorhabditis elegans).